A 60-amino-acid polypeptide reads, in one-letter code: Cytotoxin 2 (60 aa).

4 disulfides stabilise this stretch: C3-C21, C14-C38, C42-C53, and C54-C59.

This sequence belongs to the three-finger toxin family. Short-chain subfamily. Type IA cytotoxin sub-subfamily. In terms of assembly, monomer, or heterodimer with alpha-cobratoxin (AC P01391); disulfide-linked. As to expression, expressed by the venom gland.

It localises to the secreted. It is found in the target cell membrane. In terms of biological role, monomer: shows cytolytic activity. Functionally, heterodimer: has no cytolytic activity, but retains most of the alpha-cobratoxin capacity to compete with alpha-bungarotoxin for binding to Torpedo and alpha-7/CHRNA7 nicotinic acetylcholine receptors (nAChRs) as well as to Lymnea stagnalis acetylcholine-binding protein. The polypeptide is Cytotoxin 2 (Naja kaouthia (Monocled cobra)).